A 377-amino-acid polypeptide reads, in one-letter code: Chaperone protein DnaJ (377 aa).

One can recognise a J domain in the interval 5-70; it reads DFYEVLGVDR…EKRSAYDRMG (66 aa). The segment at 136 to 214 adopts a CR-type zinc-finger fold; that stretch reads GCKKEISFTA…CHGTGVKDKS (79 aa). Zn(2+)-binding residues include C149, C152, C166, C169, C188, C191, C202, and C205. CXXCXGXG motif repeat units lie at residues 149 to 156, 166 to 173, 188 to 195, and 202 to 209; these read CETCDGKG, CSTCGGHG, CPNCGGSG, and CNDCHGTG. The disordered stretch occupies residues 353-377; sequence LDGDSKHHQSPKKKSFFEKLGDLFD. The segment covering 367-377 has biased composition (basic and acidic residues); it reads SFFEKLGDLFD.

It belongs to the DnaJ family. In terms of assembly, homodimer. It depends on Zn(2+) as a cofactor.

It is found in the cytoplasm. In terms of biological role, participates actively in the response to hyperosmotic and heat shock by preventing the aggregation of stress-denatured proteins and by disaggregating proteins, also in an autonomous, DnaK-independent fashion. Unfolded proteins bind initially to DnaJ; upon interaction with the DnaJ-bound protein, DnaK hydrolyzes its bound ATP, resulting in the formation of a stable complex. GrpE releases ADP from DnaK; ATP binding to DnaK triggers the release of the substrate protein, thus completing the reaction cycle. Several rounds of ATP-dependent interactions between DnaJ, DnaK and GrpE are required for fully efficient folding. Also involved, together with DnaK and GrpE, in the DNA replication of plasmids through activation of initiation proteins. The chain is Chaperone protein DnaJ from Psychrobacter sp. (strain PRwf-1).